The sequence spans 292 residues: Putative gonadotropin-releasing hormone II receptor (292 aa).

Over 1 to 28 (MSAGNGTPWDATWNITVQWLAVDIACRT) the chain is Extracellular. Cysteines 26 and 101 form a disulfide. The helical transmembrane segment at 29-49 (LMFLKLMATYSAAFLPVVIGL) threads the bilayer. The Cytoplasmic segment spans residues 50 to 67 (DRQAAVLNPLGSRSGVRK). Residues 68 to 88 (LLGAAWGLSFLLAFPQLFLFH) traverse the membrane as a helical segment. Residues 89–115 (TVHCAGPVPFTQCVTKGSFKAQWQETT) lie on the Extracellular side of the membrane. A helical transmembrane segment spans residues 116 to 136 (YNLFTFCCLFLLPLTAMAICY). Residues 137 to 177 (SRIVLSVSRPQTRKGSHAPAGEFALPRSFDNCPRVRLRALR) are Cytoplasmic-facing. Residues 178–198 (LALLILLTFILCWTPYYLLGM) traverse the membrane as a helical segment. The Extracellular segment spans residues 199–216 (WYWFSPTMLTEVPPSLSH). The chain crosses the membrane as a helical span at residues 217 to 237 (ILFLLGLLNAPLDPLLYGAFT). Over 238–292 (LGCRRGHQELSIDSSKEGSGRMLQEEIHAFRQLEVQKTVTSRRAGETKGISITSI) the chain is Cytoplasmic.

It belongs to the G-protein coupled receptor 1 family. Post-translationally, phosphorylated on the C-terminal cytoplasmic tail. As to expression, expressed in many tissues.

It localises to the cell membrane. Putative receptor for gonadotropin releasing hormone II (GnRH II) which is most probably non-functional. The sequence is that of Putative gonadotropin-releasing hormone II receptor (GNRHR2) from Homo sapiens (Human).